A 440-amino-acid polypeptide reads, in one-letter code: GQCGNQIGSKFWEVVCDEHGIDPTGRYVGNSDLQLERVNVYYNEASCGRFVPRAILMDLEPGTMDSVRTGPYGQIFRPDNFVFGQSGAGNNWAKGHYTEGAELIDSVLDVVRKEAENCDCLQGFQVCHSLGGGTGSGMGTLLISKIREEYPDRMMLTFSVFPSPKVSDTVVEPYNATLSVHQLVENADECMVLDNEALYDICFRTLKLTTPSFGDLNHLISATMSGVTCCLRFPGQLNSDLRKLAVNLIPFPRLHFFMVGFAPLTSRGSQQYRALTVPELTQQMWDSKNMMCAADPRHGRYLTASAMFRGKMSTKEVDEQMINVQNKNSSYFVEWIPNNVKSSVCDIAPRGLSMASTFIGNSTSIQEMFRRVSEQFTAMFRRKAFLHWYTGEGMDEMEFTEAESNMNDLVSEYQQYQDATADEEGEYEDEEEEEPEHGYE.

Residues glutamine 2, glutamate 60, serine 129, glycine 133, threonine 134, glycine 135, asparagine 195, and asparagine 217 each contribute to the GTP site. Residue glutamate 60 coordinates Mg(2+). A disordered region spans residues 411-440 (SEYQQYQDATADEEGEYEDEEEEEPEHGYE). Residues 420 to 440 (TADEEGEYEDEEEEEPEHGYE) show a composition bias toward acidic residues.

Belongs to the tubulin family. As to quaternary structure, dimer of alpha and beta chains. A typical microtubule is a hollow water-filled tube with an outer diameter of 25 nm and an inner diameter of 15 nM. Alpha-beta heterodimers associate head-to-tail to form protofilaments running lengthwise along the microtubule wall with the beta-tubulin subunit facing the microtubule plus end conferring a structural polarity. Microtubules usually have 13 protofilaments but different protofilament numbers can be found in some organisms and specialized cells. Mg(2+) serves as cofactor.

The protein resides in the cytoplasm. It localises to the cytoskeleton. Tubulin is the major constituent of microtubules, a cylinder consisting of laterally associated linear protofilaments composed of alpha- and beta-tubulin heterodimers. Microtubules grow by the addition of GTP-tubulin dimers to the microtubule end, where a stabilizing cap forms. Below the cap, tubulin dimers are in GDP-bound state, owing to GTPase activity of alpha-tubulin. The sequence is that of Tubulin beta-3 chain (TUBB3) from Pisum sativum (Garden pea).